A 485-amino-acid polypeptide reads, in one-letter code: Glutamyl-tRNA(Gln) amidotransferase subunit A (485 aa).

Active-site charge relay system residues include K74 and S149. S173 functions as the Acyl-ester intermediate in the catalytic mechanism.

This sequence belongs to the amidase family. GatA subfamily. Heterotrimer of A, B and C subunits.

It catalyses the reaction L-glutamyl-tRNA(Gln) + L-glutamine + ATP + H2O = L-glutaminyl-tRNA(Gln) + L-glutamate + ADP + phosphate + H(+). Allows the formation of correctly charged Gln-tRNA(Gln) through the transamidation of misacylated Glu-tRNA(Gln) in organisms which lack glutaminyl-tRNA synthetase. The reaction takes place in the presence of glutamine and ATP through an activated gamma-phospho-Glu-tRNA(Gln). This Janthinobacterium sp. (strain Marseille) (Minibacterium massiliensis) protein is Glutamyl-tRNA(Gln) amidotransferase subunit A.